The chain runs to 215 residues: Pyrrolidone-carboxylate peptidase (215 aa).

Residues Glu80, Cys143, and His167 contribute to the active site.

The protein belongs to the peptidase C15 family. Homotetramer.

Its subcellular location is the cytoplasm. It carries out the reaction Release of an N-terminal pyroglutamyl group from a polypeptide, the second amino acid generally not being Pro.. Functionally, removes 5-oxoproline from various penultimate amino acid residues except L-proline. This Bacillus cereus (strain ATCC 10987 / NRS 248) protein is Pyrrolidone-carboxylate peptidase.